Here is a 344-residue protein sequence, read N- to C-terminus: Dihydroorotase (344 aa).

Zn(2+)-binding residues include His13 and His15. Substrate is bound by residues 15–17 (HLR) and Asn41. Zn(2+) is bound by residues Lys99, His136, and His174. An N6-carboxylysine modification is found at Lys99. Position 136 (His136) interacts with substrate. Leu219 contacts substrate. A Zn(2+)-binding site is contributed by Asp247. Asp247 is a catalytic residue. The substrate site is built by His251 and Ala263.

The protein belongs to the metallo-dependent hydrolases superfamily. DHOase family. Class II DHOase subfamily. As to quaternary structure, homodimer. The cofactor is Zn(2+).

It carries out the reaction (S)-dihydroorotate + H2O = N-carbamoyl-L-aspartate + H(+). It participates in pyrimidine metabolism; UMP biosynthesis via de novo pathway; (S)-dihydroorotate from bicarbonate: step 3/3. Catalyzes the reversible cyclization of carbamoyl aspartate to dihydroorotate. This is Dihydroorotase from Acinetobacter baumannii (strain AB307-0294).